The sequence spans 117 residues: Ubiquitin-like protein pmt3/smt3 (117 aa).

The disordered stretch occupies residues 1 to 37; that stretch reads MSESPSANISDADKSAITPTTGDTSQQDVKPSTEHIN. The span at 17–30 shows a compositional bias: polar residues; the sequence is ITPTTGDTSQQDVK. The region spanning 35-115 is the Ubiquitin-like domain; it reads HINLKVVGQD…LEQLGGCTHL (81 aa). G111 participates in a covalent cross-link: Glycyl lysine isopeptide (Gly-Lys) (interchain with K-? in acceptor proteins). A propeptide spanning residues 112–117 is cleaved from the precursor; sequence CTHLCL.

It belongs to the ubiquitin family. SUMO subfamily. In terms of assembly, interacts with rfp1.

Its subcellular location is the nucleus. Functionally, required for chromosome segregation where it may be involved in microtubule assembly. Loss of smt3 leads to an increase in telomere length. This is Ubiquitin-like protein pmt3/smt3 (pmt3) from Schizosaccharomyces pombe (strain 972 / ATCC 24843) (Fission yeast).